A 225-amino-acid chain; its full sequence is MTEETIGSRRRAAVRLKAARKHKPSSQKWLLRQLNDPYVAAAKERGFRSRAAFKLIELDEKFGLIGKGARVVDLGAAPGGWTQVALERGASRVVGIDLLDIDPIAGATLIKGDFQDESMETALAEILGGPADVVMSDMAPNTTGHTATDHLRIMGLAELALDFAFKHLAPGGAFVTKLFQGGAQGDMLNLLKRRFAQVRHAKPEASRKDSRELYLVATGYRPDAS.

Residues glycine 79, tryptophan 81, aspartate 97, aspartate 113, and aspartate 137 each coordinate S-adenosyl-L-methionine. Lysine 177 acts as the Proton acceptor in catalysis.

The protein belongs to the class I-like SAM-binding methyltransferase superfamily. RNA methyltransferase RlmE family.

The protein localises to the cytoplasm. It catalyses the reaction uridine(2552) in 23S rRNA + S-adenosyl-L-methionine = 2'-O-methyluridine(2552) in 23S rRNA + S-adenosyl-L-homocysteine + H(+). In terms of biological role, specifically methylates the uridine in position 2552 of 23S rRNA at the 2'-O position of the ribose in the fully assembled 50S ribosomal subunit. This chain is Ribosomal RNA large subunit methyltransferase E, found in Acidiphilium cryptum (strain JF-5).